The primary structure comprises 202 residues: Large ribosomal subunit protein eL13 (202 aa).

The protein belongs to the eukaryotic ribosomal protein eL13 family.

This Nicotiana tabacum (Common tobacco) protein is Large ribosomal subunit protein eL13 (RPL13).